A 463-amino-acid polypeptide reads, in one-letter code: Glycerol-3-phosphate acyltransferase, chloroplastic (463 aa).

Residues 1–91 (MSIFFSPSSP…AATQPSAGSD (91 aa)) constitute a chloroplast transit peptide. Disordered regions lie at residues 18 to 37 (NANPRVSPSSSPSSAFTPPL) and 65 to 95 (AETVHGNKWPSPSSSSSAATQPSAGSDHGHS). Composition is skewed to low complexity over residues 24–37 (SPSSSPSSAFTPPL) and 74–90 (PSPSSSSSAATQPSAGS). The short motif at 229 to 234 (HQTEAD) is the HXXXXD motif element.

Belongs to the GPAT/DAPAT family.

It localises to the plastid. The protein resides in the chloroplast stroma. It catalyses the reaction sn-glycerol 3-phosphate + an acyl-CoA = a 1-acyl-sn-glycero-3-phosphate + CoA. It functions in the pathway phospholipid metabolism; CDP-diacylglycerol biosynthesis; CDP-diacylglycerol from sn-glycerol 3-phosphate: step 1/3. In terms of biological role, esterifies acyl-group from acyl-ACP to the sn-1 position of glycerol-3-phosphate. The enzyme from chilling-resistant plants discriminates against non-fluid palmitic acid and selects oleic acid whereas the enzyme from sensitive plants accepts both fatty acids. The chain is Glycerol-3-phosphate acyltransferase, chloroplastic from Carthamus tinctorius (Safflower).